The primary structure comprises 212 residues: Methylthioribulose-1-phosphate dehydratase (212 aa).

The Zn(2+) site is built by H97 and H99.

Belongs to the aldolase class II family. MtnB subfamily. As to quaternary structure, homotetramer. The cofactor is Zn(2+).

It catalyses the reaction 5-(methylsulfanyl)-D-ribulose 1-phosphate = 5-methylsulfanyl-2,3-dioxopentyl phosphate + H2O. The protein operates within amino-acid biosynthesis; L-methionine biosynthesis via salvage pathway; L-methionine from S-methyl-5-thio-alpha-D-ribose 1-phosphate: step 2/6. Functionally, catalyzes the dehydration of methylthioribulose-1-phosphate (MTRu-1-P) into 2,3-diketo-5-methylthiopentyl-1-phosphate (DK-MTP-1-P). The polypeptide is Methylthioribulose-1-phosphate dehydratase (Bacillus cereus (strain G9842)).